We begin with the raw amino-acid sequence, 348 residues long: UDP-3-O-acylglucosamine N-acyltransferase (348 aa).

H241 functions as the Proton acceptor in the catalytic mechanism.

The protein belongs to the transferase hexapeptide repeat family. LpxD subfamily. As to quaternary structure, homotrimer.

The enzyme catalyses a UDP-3-O-[(3R)-3-hydroxyacyl]-alpha-D-glucosamine + a (3R)-hydroxyacyl-[ACP] = a UDP-2-N,3-O-bis[(3R)-3-hydroxyacyl]-alpha-D-glucosamine + holo-[ACP] + H(+). It functions in the pathway bacterial outer membrane biogenesis; LPS lipid A biosynthesis. Its function is as follows. Catalyzes the N-acylation of UDP-3-O-acylglucosamine using 3-hydroxyacyl-ACP as the acyl donor. Is involved in the biosynthesis of lipid A, a phosphorylated glycolipid that anchors the lipopolysaccharide to the outer membrane of the cell. The protein is UDP-3-O-acylglucosamine N-acyltransferase of Neisseria meningitidis serogroup C (strain 053442).